Consider the following 273-residue polypeptide: MSSKKVKYNPRKSASQNEATSASAGSKAFGFNSAKKEKLHRMALSMEAIEDVEDQSFNGKSSNLVRKRRGLDEDIDEFSSSSEDERKPARHPQSSSQKPFASSTYNVELPTSPTKITNIGQSSPRALRYLSPESQRIKNAKMKSPISTHLAKYSIHHMGTPPSKPSFLSSSVSSPASSKQKSLFQCTKDLEKRYINRVHRSSETELVQLSSIKVLDRFLSDIYLVEAEKNEEKCTVLLLKRSNTDVDNSSSLSLTLPLCKFTKNGHQVHIHPC.

A compositionally biased stretch (basic residues) spans Met1–Pro10. Disordered stretches follow at residues Met1–Asn32 and Glu50–Pro124. 3 stretches are compositionally biased toward polar residues: residues Lys12–Ala24, Gln55–Leu64, and Pro92–Pro124. Residue Ser123 is modified to Phosphoserine.

Its subcellular location is the nucleus. The protein localises to the cytoplasm. It is found in the cytoskeleton. The protein resides in the spindle. This is an uncharacterized protein from Schizosaccharomyces pombe (strain 972 / ATCC 24843) (Fission yeast).